The sequence spans 185 residues: Ribosome-recycling factor (185 aa).

The protein belongs to the RRF family.

It localises to the cytoplasm. Its function is as follows. Responsible for the release of ribosomes from messenger RNA at the termination of protein biosynthesis. May increase the efficiency of translation by recycling ribosomes from one round of translation to another. This Pseudomonas fluorescens (strain Pf0-1) protein is Ribosome-recycling factor.